Reading from the N-terminus, the 461-residue chain is Phosphatidate cytidylyltransferase 1 (461 aa).

The interval 1-68 is disordered; the sequence is MLELRHRGGC…PEVPPSSDRT (68 aa). Residue Arg-7 is modified to Omega-N-methylarginine. Residues 22–56 show a composition bias toward basic and acidic residues; it reads REGEAAGGDHETESTSDKETDIDDRYGDLDARGDS. 2 positions are modified to phosphoserine: Ser-35 and Ser-37. The next 6 helical transmembrane spans lie at 96–116, 149–169, 183–203, 230–250, 279–299, and 357–377; these read MISLFFLIIYMGSFMLMLLVL, FLLCVNYFFYGETVADYFATF, HRFISFALYLAGFCMFVLSLV, LVIQNLFEGMIWFLVPISSVI, GFIGGFFSTVIFGFIAAYVLS, and IALSTFASLIGPFGGFFASGF.

The protein belongs to the CDS family. In terms of assembly, homodimer. Interacts with FOS; this interaction may enhance catalytic activity. Mg(2+) serves as cofactor. As to expression, brain, retina and testis. Found in cerebellar Purkinje cells, pineal body, inner segment of photoreceptor cells and postmitotic spermatocytes and spermatids.

It is found in the endoplasmic reticulum membrane. It catalyses the reaction a 1,2-diacyl-sn-glycero-3-phosphate + CTP + H(+) = a CDP-1,2-diacyl-sn-glycerol + diphosphate. It carries out the reaction 1-octadecanoyl-2-(5Z,8Z,11Z,14Z-eicosatetraenoyl)-sn-glycero-3-phosphate + CTP + H(+) = 1-octadecanoyl-2-(5Z,8Z,11Z,14Z-eicosatetraenoyl)-sn-glycero-3-cytidine-5'-diphosphate + diphosphate. The catalysed reaction is 1-octadecanoyl-2-(9Z,12Z-octadecadienoyl)-sn-glycero-3-phosphate + CTP + H(+) = 1-octadecanoyl-2-(9Z,12Z-octadecadienoyl)-sn-glycero-3-cytidine-5'-diphosphate + diphosphate. The enzyme catalyses 1-hexadecanoyl-2-(5Z,8Z,11Z,14Z-eicosatetraenoyl)-sn-glycero-3-phosphate + CTP + H(+) = 1-hexadecanoyl-2-(5Z,8Z,11Z,14Z-eicosatetraenoyl)-sn-glycero-3-cytidine-5'-diphosphate + diphosphate. It catalyses the reaction 1,2-di-(5Z,8Z,11Z,14Z)-eicosatetraenoyl-sn-glycero-3-phosphate + CTP + H(+) = 1,2-di-(5Z,8Z,11Z,14Z-eicosatetraenoyl)-sn-glycero-3-cytidine-5'-diphosphate + diphosphate. It carries out the reaction 1-octadecanoyl-2-(9Z-octadecenoyl)-sn-glycero-3-phosphate + CTP + H(+) = 1-octadecanoyl-2-(9Z-octadecenoyl)-sn-glycero-3-cytidine-5'-diphosphate + diphosphate. The catalysed reaction is 1-octadecanoyl-2-(4Z,7Z,10Z,13Z,16Z,19Z-docosahexaenoyl)-sn-glycero-3-phosphate + CTP + H(+) = 1-octadecanoyl-2-(4Z,7Z,10Z,13Z,16Z,19Z-docosahexaenoyl)-sn-glycero-3-cytidine-5'-diphosphate + diphosphate. The enzyme catalyses 1,2-di-(9Z,12Z-octadecadienoyl)-sn-glycero-3-phosphate + CTP + H(+) = 1,2-di-(9Z,12Z-octadecadienoyl)-sn-glycero-3-cytidine-5'-diphosphate + diphosphate. It catalyses the reaction 1,2-di-(9Z-octadecenoyl)-sn-glycero-3-phosphate + CTP + H(+) = 1,2-di-(9Z-octadecenoyl)-sn-glycero-3-cytidine-5'-diphosphate + diphosphate. It participates in phospholipid metabolism; CDP-diacylglycerol biosynthesis; CDP-diacylglycerol from sn-glycerol 3-phosphate: step 3/3. Its activity is regulated as follows. Activated by GTP. Inhibited by CDP-diacylglycerol and by phosphatidylglycerol 4,5-bisphosphate (PPI2). In terms of biological role, catalyzes the conversion of phosphatidic acid (PA) to CDP-diacylglycerol (CDP-DAG), an essential intermediate in the synthesis of phosphatidylglycerol, cardiolipin and phosphatidylinositol. Exhibits almost no acyl chain preference for PA, showing no discrimination for the sn-1/sn-2 acyl chain composition of PAs. Plays an important role in regulatinng the growth of lipid droplets which are storage organelles at the center of lipid and energy homeostasis. Positively regulates the differentiation and development of adipocytes. The protein is Phosphatidate cytidylyltransferase 1 of Rattus norvegicus (Rat).